The following is a 105-amino-acid chain: UPF0145 protein Mevan_1624 (105 aa).

The protein belongs to the UPF0145 family.

In Methanococcus vannielii (strain ATCC 35089 / DSM 1224 / JCM 13029 / OCM 148 / SB), this protein is UPF0145 protein Mevan_1624.